A 1617-amino-acid chain; its full sequence is ATP-binding cassette sub-family A member 6 (1617 aa).

A helical transmembrane segment spans residues 31-51; that stretch reads LLEWGLSILLGLCIALFSSSM. Residues N84 and N109 are each glycosylated (N-linked (GlcNAc...) asparagine). 6 consecutive transmembrane segments (helical) span residues 222 to 242, 268 to 288, 297 to 317, 327 to 347, 355 to 375, and 397 to 417; these read MFIL…SLNV, GLIY…IITF, FMVI…LVFL, LTNL…FTVF, LEWI…IQII, and IATF…ALYF. The region spanning 478-713 is the ABC transporter 1 domain; the sequence is IRIRNVKKEY…WGLGYHLSLH (236 aa). Residue 514–521 participates in ATP binding; sequence GHSGAGKS. The helical transmembrane segment at 854 to 874 threads the bilayer; sequence VLLTLLLVFGIAIFPLIVENI. The N-linked (GlcNAc...) asparagine glycan is linked to N940. Helical transmembrane passes span 1007–1027, 1062–1082, 1094–1114, 1127–1147, 1150–1170, and 1194–1214; these read IGLW…LCSI, ALVD…IFYI, IVFA…FFIY, SGLW…ITLI, FDLS…LLGF, and ATDF…VFVL. The ABC transporter 2 domain occupies 1288–1513; it reads GQKKSCFSKR…LGKDYILELK (226 aa). Position 1320–1327 (1320–1327) interacts with ATP; sequence GPNGAGKS.

This sequence belongs to the ABC transporter superfamily. ABCA family. As to expression, widely expressed with higher expression in liver.

It is found in the golgi apparatus membrane. Probable transporter which may play a role in macrophage lipid transport and homeostasis. The protein is ATP-binding cassette sub-family A member 6 (ABCA6) of Homo sapiens (Human).